The sequence spans 434 residues: Histidinol dehydrogenase (434 aa).

Zn(2+) contacts are provided by Glu-260 and His-263. Residues Glu-330 and His-331 each act as proton acceptor in the active site. Zn(2+) is bound at residue His-423.

Belongs to the histidinol dehydrogenase family. Zn(2+) serves as cofactor.

The catalysed reaction is L-histidinol + 2 NAD(+) + H2O = L-histidine + 2 NADH + 3 H(+). It participates in amino-acid biosynthesis; L-histidine biosynthesis; L-histidine from 5-phospho-alpha-D-ribose 1-diphosphate: step 9/9. Its function is as follows. Catalyzes the sequential NAD-dependent oxidations of L-histidinol to L-histidinaldehyde and then to L-histidine. The sequence is that of Histidinol dehydrogenase (hisD) from Synechocystis sp. (strain ATCC 27184 / PCC 6803 / Kazusa).